Reading from the N-terminus, the 78-residue chain is Cytochrome c-551 (78 aa).

Residues Cys14, Cys17, His18, and Met55 each contribute to the heme c site.

Post-translationally, binds 1 heme c group covalently per subunit.

The chain is Cytochrome c-551 from Halorhodospira halophila (Ectothiorhodospira halophila).